The following is a 61-amino-acid chain: uncharacterized protein (61 aa).

The stretch at 34–61 (TDVEDIDRLISMLDDLEAKYERFKKDWE) forms a coiled coil.

This is an uncharacterized protein from Bacillus subtilis (strain 168).